A 248-amino-acid polypeptide reads, in one-letter code: UPF0736 protein BCG9842_B4111 (248 aa).

This sequence belongs to the UPF0736 family.

The chain is UPF0736 protein BCG9842_B4111 from Bacillus cereus (strain G9842).